Reading from the N-terminus, the 184-residue chain is ATP synthase subunit b, chloroplastic (184 aa).

The chain crosses the membrane as a helical span at residues leucine 27 to leucine 49.

This sequence belongs to the ATPase B chain family. In terms of assembly, F-type ATPases have 2 components, F(1) - the catalytic core - and F(0) - the membrane proton channel. F(1) has five subunits: alpha(3), beta(3), gamma(1), delta(1), epsilon(1). F(0) has four main subunits: a(1), b(1), b'(1) and c(10-14). The alpha and beta chains form an alternating ring which encloses part of the gamma chain. F(1) is attached to F(0) by a central stalk formed by the gamma and epsilon chains, while a peripheral stalk is formed by the delta, b and b' chains.

It localises to the plastid. It is found in the chloroplast thylakoid membrane. F(1)F(0) ATP synthase produces ATP from ADP in the presence of a proton or sodium gradient. F-type ATPases consist of two structural domains, F(1) containing the extramembraneous catalytic core and F(0) containing the membrane proton channel, linked together by a central stalk and a peripheral stalk. During catalysis, ATP synthesis in the catalytic domain of F(1) is coupled via a rotary mechanism of the central stalk subunits to proton translocation. In terms of biological role, component of the F(0) channel, it forms part of the peripheral stalk, linking F(1) to F(0). In Liriodendron tulipifera (Tuliptree), this protein is ATP synthase subunit b, chloroplastic.